The chain runs to 356 residues: S-adenosylmethionine:tRNA ribosyltransferase-isomerase (356 aa).

It belongs to the QueA family. Monomer.

It localises to the cytoplasm. The enzyme catalyses 7-aminomethyl-7-carbaguanosine(34) in tRNA + S-adenosyl-L-methionine = epoxyqueuosine(34) in tRNA + adenine + L-methionine + 2 H(+). It functions in the pathway tRNA modification; tRNA-queuosine biosynthesis. Its function is as follows. Transfers and isomerizes the ribose moiety from AdoMet to the 7-aminomethyl group of 7-deazaguanine (preQ1-tRNA) to give epoxyqueuosine (oQ-tRNA). The chain is S-adenosylmethionine:tRNA ribosyltransferase-isomerase from Xanthomonas oryzae pv. oryzae (strain KACC10331 / KXO85).